Here is a 364-residue protein sequence, read N- to C-terminus: Spermidine/putrescine import ATP-binding protein PotA (364 aa).

The ABC transporter domain occupies 5–235; sequence LSLKSVSKSY…PVNRFVADFI (231 aa). 37–44 contributes to the ATP binding site; sequence GPSGCGKT.

The protein belongs to the ABC transporter superfamily. Spermidine/putrescine importer (TC 3.A.1.11.1) family. As to quaternary structure, the complex is composed of two ATP-binding proteins (PotA), two transmembrane proteins (PotB and PotC) and a solute-binding protein (PotD).

The protein localises to the cell membrane. The enzyme catalyses ATP + H2O + polyamine-[polyamine-binding protein]Side 1 = ADP + phosphate + polyamineSide 2 + [polyamine-binding protein]Side 1.. Part of the ABC transporter complex PotABCD involved in spermidine/putrescine import. Responsible for energy coupling to the transport system. The sequence is that of Spermidine/putrescine import ATP-binding protein PotA from Staphylococcus aureus (strain USA300).